A 339-amino-acid polypeptide reads, in one-letter code: FR-33289 synthase (339 aa).

Fe(2+) contacts are provided by His150, Asp152, and His288.

This sequence belongs to the TfdA dioxygenase family. Homodimer. The cofactor is Fe(2+).

The catalysed reaction is 3-(N-acetyl-N-hydroxy)aminopropylphosphonate + 2-oxoglutarate + O2 = (R)-(3-(acetylhydroxyamino)-2-hydroxypropyl)phosphonate + succinate + CO2. Its pathway is antibiotic biosynthesis. Monooxygenase involved in the biosynthesis of the phosphonate antibiotic FR-33289, an antimalarial agent. Catalyzes the oxidative decarboxylation of the antibiotic FR-900098 (3-(N-acetyl-N-hydroxy)aminopropylphosphonate) to form FR-33289 ((R)-(3-(acetylhydroxyamino)-2-hydroxypropyl)phosphonate). The chain is FR-33289 synthase from Streptomyces rubellomurinus (strain ATCC 31215).